The chain runs to 343 residues: MTDKVRLTTMVQAAGUAAKLGPAGLEEAIHDITRSDDPNLIVGVEGAEDAGIYRIGENLALVETTDIITPLVDDPFTFGRIAAANALSDVYAMGGRPVTAMNLAFFPACSLPTSVLAAILAGGSAALKEAGTCLVGGHTVEDDELKFGLAVTGLIDPARVVRNCTARPGDLIVITKPLGTGIISTAIKAEMIEPEVEAEATRWMTTLNAKAADLMVACRATAATDVTGFGFIGHACEMALGAKVSFKIELARVPVIPGVPALIDDGMVPAGCYRNRQHYEQHVSGNSGDPLLPLFDPQTSGGLLITFAPDDARTFLSRAGKEGLFAACIGEVEPAGGTPIVFV.

Selenocysteine 16 is a catalytic residue. Residue selenocysteine 16 is a non-standard amino acid, selenocysteine. Residues lysine 19 and 46 to 48 (GAE) each bind ATP. Aspartate 49 contributes to the Mg(2+) binding site. ATP-binding positions include aspartate 66, aspartate 89, and 137 to 139 (GHT). Aspartate 89 is a Mg(2+) binding site. A Mg(2+)-binding site is contributed by aspartate 225.

The protein belongs to the selenophosphate synthase 1 family. Class I subfamily. Homodimer. The cofactor is Mg(2+).

It carries out the reaction hydrogenselenide + ATP + H2O = selenophosphate + AMP + phosphate + 2 H(+). Its function is as follows. Synthesizes selenophosphate from selenide and ATP. The chain is Selenide, water dikinase from Citrifermentans bemidjiense (strain ATCC BAA-1014 / DSM 16622 / JCM 12645 / Bem) (Geobacter bemidjiensis).